A 59-amino-acid polypeptide reads, in one-letter code: Large ribosomal subunit protein uL30 (59 aa).

This sequence belongs to the universal ribosomal protein uL30 family. As to quaternary structure, part of the 50S ribosomal subunit.

The chain is Large ribosomal subunit protein uL30 from Buchnera aphidicola subsp. Acyrthosiphon pisum (strain 5A).